Consider the following 147-residue polypeptide: MSETRDLQGGKAFGLRKAQQEERINEINQQFLDDPKYSSDEDLPSKLEAFKKKYMEFDLNEDGGIDIMSLKRMMEKLGVPKTHLELKKLIMEVSSGPGETFSYSDFLKMMLGKRSAILKMILMYEEKAREQEKPTGLPAKKAISELP.

S2 bears the N-acetylserine mark. Residue K11 is modified to N6-acetyllysine. At S39 the chain carries Phosphoserine. The EF-hand 1 domain occupies S45–P80. Ca(2+)-binding residues include D58, N60, and D62. Residues K81 to S115 form the EF-hand 2; degenerate domain. The segment at A128 to P147 is disordered.

Phosphorylated on serine residues.

The protein resides in the cytoplasm. It localises to the cytoskeleton. The protein localises to the cell projection. Its subcellular location is the ruffle membrane. It is found in the phagocytic cup. Functionally, may play a role in macrophage activation and function. In Bos taurus (Bovine), this protein is Allograft inflammatory factor 1 (AIF1).